Reading from the N-terminus, the 246-residue chain is uncharacterized protein (246 aa).

An NADP(+)-binding site is contributed by 10-34 (VITGASSGIGEETVNLLSENGAKLV). Ser140 is a substrate binding site. Catalysis depends on Tyr153, which acts as the Proton acceptor.

This sequence belongs to the short-chain dehydrogenases/reductases (SDR) family.

This is an uncharacterized protein from Staphylococcus saprophyticus subsp. saprophyticus (strain ATCC 15305 / DSM 20229 / NCIMB 8711 / NCTC 7292 / S-41).